Reading from the N-terminus, the 613-residue chain is ATP-dependent zinc metalloprotease FtsH (613 aa).

Residues 1–4 (MVKN) lie on the Cytoplasmic side of the membrane. A helical membrane pass occupies residues 5-25 (LIFWLVITVVLMSVFQNFNSS). At 26–98 (DTSNHRVDYS…VGEIPEEPSL (73 aa)) the chain is on the extracellular side. A helical transmembrane segment spans residues 99–119 (LISIFISWFPMLLLIGVWIFF). Topologically, residues 120-613 (MRQMQMGGGK…WLEVDQKKDI (494 aa)) are cytoplasmic. 192–199 (GPPGTGKT) contacts ATP. Position 414 (histidine 414) interacts with Zn(2+). Residue glutamate 415 is part of the active site. Zn(2+)-binding residues include histidine 418 and aspartate 492.

The protein in the central section; belongs to the AAA ATPase family. It in the C-terminal section; belongs to the peptidase M41 family. As to quaternary structure, homohexamer. The cofactor is Zn(2+).

It localises to the cell membrane. Functionally, acts as a processive, ATP-dependent zinc metallopeptidase for both cytoplasmic and membrane proteins. Plays a role in the quality control of integral membrane proteins. This chain is ATP-dependent zinc metalloprotease FtsH, found in Buchnera aphidicola subsp. Schizaphis graminum (strain Sg).